Consider the following 62-residue polypeptide: Large ribosomal subunit protein bL28 (62 aa).

This sequence belongs to the bacterial ribosomal protein bL28 family.

In Thermoanaerobacter sp. (strain X514), this protein is Large ribosomal subunit protein bL28.